The chain runs to 423 residues: Putative competence-damage inducible protein (423 aa).

This sequence belongs to the CinA family.

This is Putative competence-damage inducible protein from Streptococcus pyogenes serotype M6 (strain ATCC BAA-946 / MGAS10394).